A 475-amino-acid chain; its full sequence is 7-dehydrocholesterol reductase (475 aa).

The segment at 1–21 (MAAKSQPSAPKTKSTSGLTNG) is disordered. Ser-14 carries the post-translational modification Phosphoserine. 6 helical membrane-spanning segments follow: residues 40–60 (LASVIFLLLFAPFIVYYFIMA), 151–173 (WLLTHLLWFANAHLLGWFSPTII), 178–200 (IPLLWCANILGYTVSTFAMVKGY), 266–286 (VTNSMVLVNILQAIYVLDFFW), 306–326 (LGWGDCVWLPYLYTLQGLYLV), and 331–351 (QLPTYYALGVLLLGLLGYYIF). Residues Lys-358, Arg-362, Leu-395, Trp-400, and 407-408 (NY) each bind NADP(+). Residues 420 to 440 (LACGGGHLLPYFYIIFMAILL) traverse the membrane as a helical segment. Residues Asp-447, 451–455 (CANKY), and Tyr-462 contribute to the NADP(+) site.

This sequence belongs to the ERG4/ERG24 family. As to quaternary structure, interacts with DHCR24; this interaction regulates DHCR7 activity. Interacts with TMEM147.

Its subcellular location is the endoplasmic reticulum membrane. The catalysed reaction is cholesterol + NADP(+) = 7-dehydrocholesterol + NADPH + H(+). The enzyme catalyses 7-dehydrodesmosterol + NADPH + H(+) = desmosterol + NADP(+). It catalyses the reaction 5,6alpha-epoxy-5alpha-cholestan-3beta-ol + H2O = 5alpha-cholestane-3beta,5,6beta-triol. It carries out the reaction 5,6beta-epoxy-5beta-cholestan-3beta-ol + H2O = 5alpha-cholestane-3beta,5,6beta-triol. Its pathway is steroid biosynthesis; cholesterol biosynthesis. Oxidoreductase that catalyzes the last step of the cholesterol synthesis pathway, which transforms cholesta-5,7-dien-3beta-ol (7-dehydrocholesterol,7-DHC) into cholesterol by reducing the C7-C8 double bond of its sterol core. Can also metabolize cholesta-5,7,24-trien-3beta-ol (7-dehydrodemosterol, 7-DHD) to desmosterol, which is then metabolized by the Delta(24)-sterol reductase (DHCR24) to cholesterol. Modulates ferroptosis (a form of regulated cell death driven by iron-dependent lipid peroxidation) through the metabolic breakdown of the anti-ferroptotic metabolites 7-DHC and 7-DHD which, when accumulated, divert the propagation of peroxyl radical-mediated damage from phospholipid components to its sterol core, protecting plasma and mitochondrial membranes from phospholipid autoxidation. Its function is as follows. Component of the microsomal antiestrogen binding site (AEBS), a multiproteic complex at the ER membrane that consists of an association between cholestenol Delta-isomerase/EBP and DHCR7. This complex is responsible for cholesterol-5,6-epoxide hydrolase (ChEH) activity, which consists in the hydration of cholesterol-5,6-epoxides (5,6-EC) into cholestane-3beta,5alpha,6beta-triol (CT). The precise role of each component of this complex has not been described yet. This chain is 7-dehydrocholesterol reductase (DHCR7), found in Bos taurus (Bovine).